Here is a 145-residue protein sequence, read N- to C-terminus: 3-hydroxyacyl-[acyl-carrier-protein] dehydratase FabZ (145 aa).

The active site involves His-48.

This sequence belongs to the thioester dehydratase family. FabZ subfamily.

It is found in the cytoplasm. The catalysed reaction is a (3R)-hydroxyacyl-[ACP] = a (2E)-enoyl-[ACP] + H2O. Involved in unsaturated fatty acids biosynthesis. Catalyzes the dehydration of short chain beta-hydroxyacyl-ACPs and long chain saturated and unsaturated beta-hydroxyacyl-ACPs. In Marinomonas sp. (strain MWYL1), this protein is 3-hydroxyacyl-[acyl-carrier-protein] dehydratase FabZ.